We begin with the raw amino-acid sequence, 184 residues long: Oligoribonuclease (184 aa).

Residues 7-170 (LIWIDLEMTG…DDIRESVAEL (164 aa)) enclose the Exonuclease domain. The active site involves Y128.

It belongs to the oligoribonuclease family.

It localises to the cytoplasm. 3'-to-5' exoribonuclease specific for small oligoribonucleotides. The sequence is that of Oligoribonuclease from Baumannia cicadellinicola subsp. Homalodisca coagulata.